A 293-amino-acid chain; its full sequence is Ribosomal protein L11 methyltransferase (293 aa).

Residues Thr145, Gly166, Asp188, and Asn230 each coordinate S-adenosyl-L-methionine.

The protein belongs to the methyltransferase superfamily. PrmA family.

The protein localises to the cytoplasm. The catalysed reaction is L-lysyl-[protein] + 3 S-adenosyl-L-methionine = N(6),N(6),N(6)-trimethyl-L-lysyl-[protein] + 3 S-adenosyl-L-homocysteine + 3 H(+). Functionally, methylates ribosomal protein L11. This Actinobacillus succinogenes (strain ATCC 55618 / DSM 22257 / CCUG 43843 / 130Z) protein is Ribosomal protein L11 methyltransferase.